A 215-amino-acid chain; its full sequence is Probable transaldolase (215 aa).

The active-site Schiff-base intermediate with substrate is Lys-83.

It belongs to the transaldolase family. Type 3B subfamily.

The protein resides in the cytoplasm. The enzyme catalyses D-sedoheptulose 7-phosphate + D-glyceraldehyde 3-phosphate = D-erythrose 4-phosphate + beta-D-fructose 6-phosphate. The protein operates within carbohydrate degradation; pentose phosphate pathway; D-glyceraldehyde 3-phosphate and beta-D-fructose 6-phosphate from D-ribose 5-phosphate and D-xylulose 5-phosphate (non-oxidative stage): step 2/3. Transaldolase is important for the balance of metabolites in the pentose-phosphate pathway. The chain is Probable transaldolase from Clostridium perfringens (strain 13 / Type A).